The sequence spans 460 residues: Proline--tRNA ligase (460 aa).

Belongs to the class-II aminoacyl-tRNA synthetase family. ProS type 3 subfamily. Homodimer.

It localises to the cytoplasm. It catalyses the reaction tRNA(Pro) + L-proline + ATP = L-prolyl-tRNA(Pro) + AMP + diphosphate. Its function is as follows. Catalyzes the attachment of proline to tRNA(Pro) in a two-step reaction: proline is first activated by ATP to form Pro-AMP and then transferred to the acceptor end of tRNA(Pro). The protein is Proline--tRNA ligase of Methanococcus maripaludis (strain DSM 14266 / JCM 13030 / NBRC 101832 / S2 / LL).